A 276-amino-acid chain; its full sequence is MNGVSAVVLGVIEGVTEFLPVSSTAHLTIAEALMGMKTDAPAVTAFTAVIQMGAILAAIVYFRRDIRTVVTAWFRGLVRADERRSPDALLGWYVIAGTIPIGLAGYLGRNVIKHDLRSLWYVVAGLVLWSIAIVYAERTAAQRRDLRDMRLPDAVFIGVIQVLALVPGVSRSGATISAGLRQGFDRVAATRFSFLLAIPALLAAGIFELKDAVGTSGVSMASLVVGTGMAFLTAYASIAWLLRFVAHHSLTNFVWYRVTVAVFVVAALTTGLVHAV.

The next 7 helical transmembrane spans lie at 42–62 (AVTAFTAVIQMGAILAAIVYF), 88–108 (ALLGWYVIAGTIPIGLAGYLG), 116–136 (LRSLWYVVAGLVLWSIAIVYA), 149–169 (MRLPDAVFIGVIQVLALVPGV), 187–207 (VAATRFSFLLAIPALLAAGIF), 222–242 (SLVVGTGMAFLTAYASIAWLL), and 253–273 (FVWYRVTVAVFVVAALTTGLV).

It belongs to the UppP family.

It is found in the cell membrane. It catalyses the reaction di-trans,octa-cis-undecaprenyl diphosphate + H2O = di-trans,octa-cis-undecaprenyl phosphate + phosphate + H(+). Its function is as follows. Catalyzes the dephosphorylation of undecaprenyl diphosphate (UPP). Confers resistance to bacitracin. This is Undecaprenyl-diphosphatase from Acidothermus cellulolyticus (strain ATCC 43068 / DSM 8971 / 11B).